The following is a 266-amino-acid chain: 5'-nucleotidase SurE (266 aa).

The a divalent metal cation site is built by aspartate 10, aspartate 11, serine 41, and asparagine 97.

This sequence belongs to the SurE nucleotidase family. A divalent metal cation is required as a cofactor.

Its subcellular location is the cytoplasm. It carries out the reaction a ribonucleoside 5'-phosphate + H2O = a ribonucleoside + phosphate. Functionally, nucleotidase that shows phosphatase activity on nucleoside 5'-monophosphates. The polypeptide is 5'-nucleotidase SurE (Methanocella arvoryzae (strain DSM 22066 / NBRC 105507 / MRE50)).